Consider the following 229-residue polypeptide: ATP synthase subunit a (229 aa).

7 helical membrane-spanning segments follow: residues 25–45 (VHII…VLGA), 58–75 (FLEV…SVTG), 81–101 (FFPL…IGLV), 110–130 (SINT…FIGI), 141–161 (FLGP…IGHL), 175–195 (MMGH…FFAP), and 196–216 (LPIM…FFLL).

It belongs to the ATPase A chain family. F-type ATPases have 2 components, CF(1) - the catalytic core - and CF(0) - the membrane proton channel. CF(1) has five subunits: alpha(3), beta(3), gamma(1), delta(1), epsilon(1). CF(0) has three main subunits: a(1), b(2) and c(9-12). The alpha and beta chains form an alternating ring which encloses part of the gamma chain. CF(1) is attached to CF(0) by a central stalk formed by the gamma and epsilon chains, while a peripheral stalk is formed by the delta and b chains.

Its subcellular location is the cell inner membrane. Key component of the proton channel; it plays a direct role in the translocation of protons across the membrane. The chain is ATP synthase subunit a from Desulfosudis oleivorans (strain DSM 6200 / JCM 39069 / Hxd3) (Desulfococcus oleovorans).